The primary structure comprises 533 residues: Glucose-6-phosphate isomerase (533 aa).

The active-site Proton donor is glutamate 341. Catalysis depends on residues histidine 372 and lysine 501.

This sequence belongs to the GPI family.

Its subcellular location is the cytoplasm. The catalysed reaction is alpha-D-glucose 6-phosphate = beta-D-fructose 6-phosphate. Its pathway is carbohydrate biosynthesis; gluconeogenesis. The protein operates within carbohydrate degradation; glycolysis; D-glyceraldehyde 3-phosphate and glycerone phosphate from D-glucose: step 2/4. Functionally, catalyzes the reversible isomerization of glucose-6-phosphate to fructose-6-phosphate. This is Glucose-6-phosphate isomerase from Cereibacter sphaeroides (strain KD131 / KCTC 12085) (Rhodobacter sphaeroides).